A 90-amino-acid polypeptide reads, in one-letter code: Acyl-CoA-binding protein (90 aa).

A compositionally biased stretch (basic and acidic residues) spans 1 to 16; sequence MGLKEDFEEHAEKAKT. The tract at residues 1–20 is disordered; it reads MGLKEDFEEHAEKAKTLPEN. Positions 3-88 constitute an ACB domain; the sequence is LKEDFEEHAE…VKQLLGEAAA (86 aa). Residues 30–34, Lys56, and Tyr75 contribute to the an acyl-CoA site; that span reads YGLYK.

It belongs to the ACBP family.

In terms of biological role, binds medium- and long-chain acyl-CoA esters with very high affinity and may function as an intracellular carrier of acyl-CoA esters. This is Acyl-CoA-binding protein from Ricinus communis (Castor bean).